A 215-amino-acid polypeptide reads, in one-letter code: Rac-like GTP-binding protein ARAC10 (215 aa).

Position 15–22 (15–22 (GDGAVGKT)) interacts with GTP. An Effector region motif is present at residues 37 to 45 (YIPTVFDNF). GTP is bound by residues 62–66 (DTAGQ) and 120–123 (TKLD). S-palmitoyl cysteine attachment occurs at residues Cys-202 and Cys-208.

It belongs to the small GTPase superfamily. Rho family. As to quaternary structure, component of the active ARAC10-IRC5-KIN13A complex. Interacts with ICR5.

The protein resides in the membrane. It is found in the cytoplasm. The protein localises to the cytoskeleton. Involved in local disassembly of cortical microtubules when associated with ICR5 and KIN13A. The protein is Rac-like GTP-binding protein ARAC10 (ARAC10) of Arabidopsis thaliana (Mouse-ear cress).